A 222-amino-acid polypeptide reads, in one-letter code: Holliday junction branch migration complex subunit RuvA (222 aa).

The segment at 1-67 (MISWLNGLKI…EDGSQLIGFL (67 aa)) is domain I. The tract at residues 68-146 (NKLERDLFRK…DLIGSSLKKT (79 aa)) is domain II. A flexible linker region spans residues 147–155 (NNHLELEYE). The tract at residues 155-222 (ETNVADEVRS…TLIRINTESG (68 aa)) is domain III.

This sequence belongs to the RuvA family. Homotetramer. Forms an RuvA(8)-RuvB(12)-Holliday junction (HJ) complex. HJ DNA is sandwiched between 2 RuvA tetramers; dsDNA enters through RuvA and exits via RuvB. An RuvB hexamer assembles on each DNA strand where it exits the tetramer. Each RuvB hexamer is contacted by two RuvA subunits (via domain III) on 2 adjacent RuvB subunits; this complex drives branch migration. In the full resolvosome a probable DNA-RuvA(4)-RuvB(12)-RuvC(2) complex forms which resolves the HJ.

It is found in the cytoplasm. In terms of biological role, the RuvA-RuvB-RuvC complex processes Holliday junction (HJ) DNA during genetic recombination and DNA repair, while the RuvA-RuvB complex plays an important role in the rescue of blocked DNA replication forks via replication fork reversal (RFR). RuvA specifically binds to HJ cruciform DNA, conferring on it an open structure. The RuvB hexamer acts as an ATP-dependent pump, pulling dsDNA into and through the RuvAB complex. HJ branch migration allows RuvC to scan DNA until it finds its consensus sequence, where it cleaves and resolves the cruciform DNA. The protein is Holliday junction branch migration complex subunit RuvA of Prochlorococcus marinus (strain SARG / CCMP1375 / SS120).